A 363-amino-acid polypeptide reads, in one-letter code: Phosphoserine aminotransferase (363 aa).

R42 lines the L-glutamate pocket. Pyridoxal 5'-phosphate is bound by residues 76–77, W101, T151, D170, and Q193; that span reads AS. K194 is modified (N6-(pyridoxal phosphate)lysine). Residue 234-235 coordinates pyridoxal 5'-phosphate; sequence NT.

It belongs to the class-V pyridoxal-phosphate-dependent aminotransferase family. SerC subfamily. As to quaternary structure, homodimer. It depends on pyridoxal 5'-phosphate as a cofactor.

It localises to the cytoplasm. The catalysed reaction is O-phospho-L-serine + 2-oxoglutarate = 3-phosphooxypyruvate + L-glutamate. The enzyme catalyses 4-(phosphooxy)-L-threonine + 2-oxoglutarate = (R)-3-hydroxy-2-oxo-4-phosphooxybutanoate + L-glutamate. Its pathway is amino-acid biosynthesis; L-serine biosynthesis; L-serine from 3-phospho-D-glycerate: step 2/3. Its function is as follows. Catalyzes the reversible conversion of 3-phosphohydroxypyruvate to phosphoserine and of 3-hydroxy-2-oxo-4-phosphonooxybutanoate to phosphohydroxythreonine. In Listeria monocytogenes serovar 1/2a (strain ATCC BAA-679 / EGD-e), this protein is Phosphoserine aminotransferase.